The sequence spans 453 residues: Transmembrane protease serine 3 (453 aa).

The Cytoplasmic segment spans residues 1–48 (MGENDPPAAEAPFSFRSLFGLDDLKISPVAPDGDAVAAQILSLLPLKF). A helical; Signal-anchor for type II membrane protein membrane pass occupies residues 49–69 (FPIIVIGIIALILALAIGLGI). Residues 70 to 453 (HFDCSGKYRC…HEQLERDLKT (384 aa)) are Extracellular-facing. In terms of domain architecture, LDL-receptor class A spans 72–108 (DCSGKYRCHSSFKCIELTARCDGVSDCKNAEDEYRCV). 10 cysteine pairs are disulfide-bonded: Cys-73/Cys-85, Cys-79/Cys-98, Cys-92/Cys-107, Cys-129/Cys-194, Cys-142/Cys-204, Cys-207/Cys-324, Cys-242/Cys-258, Cys-338/Cys-406, Cys-369/Cys-385, and Cys-396/Cys-424. Residues 104 to 205 (EYRCVRVSGQ…SGHVVTLKCS (102 aa)) enclose the SRCR domain. Positions 217 to 448 (IVGGNMSSLT…FLDWIHEQLE (232 aa)) constitute a Peptidase S1 domain. Asn-221 carries N-linked (GlcNAc...) asparagine glycosylation. Residues His-257 and Asp-304 each act as charge relay system in the active site. The active-site Charge relay system is Ser-400.

This sequence belongs to the peptidase S1 family. Post-translationally, undergoes autoproteolytic activation. As to expression, strongly expressed in liver, cochlea, brain, cerebellum, spleen, lung, and muscle and at a lower degree in retina, kidney, and heart. Expressed in the spiral ganglion, the cells supporting the organ of Corti and the stria vascularis. Isoform 2 is strongly expressed only in the cochlea with very faint expression in the cerebellum, spleen and muscle.

It localises to the endoplasmic reticulum membrane. Its function is as follows. Probable serine protease that plays a role in hearing. Acts as a permissive factor for cochlear hair cell survival and activation at the onset of hearing and is required for saccular hair cell survival. Activates ENaC (in vitro). The sequence is that of Transmembrane protease serine 3 (Tmprss3) from Mus musculus (Mouse).